Consider the following 155-residue polypeptide: MGDMPFWKTKSLDEMTNAEWESLCDGCGLCCLNKLEDWDTGEIAWTSIRCTLLDGENCRCKDYDNRQATVPDCVQLTPKAVREISWLPPTCGYRLVAEGRDLYWWHPLVSGDPETVHAAGISVRGRTVAEDGIEIEDYEDYLVTWPLEVGLEPVE.

Belongs to the UPF0260 family.

The protein is UPF0260 protein NGR_c07710 of Sinorhizobium fredii (strain NBRC 101917 / NGR234).